The sequence spans 258 residues: Tryptophan synthase alpha chain (258 aa).

Catalysis depends on proton acceptor residues Glu-52 and Asp-63.

It belongs to the TrpA family. Tetramer of two alpha and two beta chains.

It carries out the reaction (1S,2R)-1-C-(indol-3-yl)glycerol 3-phosphate + L-serine = D-glyceraldehyde 3-phosphate + L-tryptophan + H2O. Its pathway is amino-acid biosynthesis; L-tryptophan biosynthesis; L-tryptophan from chorismate: step 5/5. Its function is as follows. The alpha subunit is responsible for the aldol cleavage of indoleglycerol phosphate to indole and glyceraldehyde 3-phosphate. The sequence is that of Tryptophan synthase alpha chain from Streptococcus pneumoniae serotype 4 (strain ATCC BAA-334 / TIGR4).